Here is a 383-residue protein sequence, read N- to C-terminus: WAT1-related protein At3g18200 (383 aa).

Basic residues predominate over residues 1 to 16 (MCYQTSKKKRRSRKRR). Positions 1-23 (MCYQTSKKKRRSRKRRAQEEKEK) are disordered. The next 10 helical transmembrane spans lie at 33-53 (VKLVVALITLQFCFAGFHIVS), 65-85 (VYPVYRNLLALLLIGPFAYFF), 91-111 (PPLTISLLAQFFFLALIGITA), 126-146 (TFASAMQNSVPAITFIMACAL), 158-178 (GVAKVLGTLVSIGGATVITLY), 204-224 (LTLGWLYLMGHCLSWAGWMVL), 237-257 (TLTSFTCFFGLIQFLVIALFV), 272-292 (LFTILYAGIIASGLVVYLQTW), 300-320 (VFVAVFQPLQTLLVAAMAFLI), and 325-345 (LYSGGIVGAVFIMLGLYLVLW). EamA domains are found at residues 44 to 173 (FCFA…GGAT) and 216 to 344 (LSWA…YLVL).

This sequence belongs to the drug/metabolite transporter (DMT) superfamily. Plant drug/metabolite exporter (P-DME) (TC 2.A.7.4) family.

The protein localises to the membrane. The chain is WAT1-related protein At3g18200 from Arabidopsis thaliana (Mouse-ear cress).